We begin with the raw amino-acid sequence, 157 residues long: UPF0254 protein MTH_1148 (157 aa).

It belongs to the UPF0254 family.

The protein is UPF0254 protein MTH_1148 of Methanothermobacter thermautotrophicus (strain ATCC 29096 / DSM 1053 / JCM 10044 / NBRC 100330 / Delta H) (Methanobacterium thermoautotrophicum).